The primary structure comprises 162 residues: Endoribonuclease YbeY (162 aa).

Residues H117, H121, and H127 each coordinate Zn(2+).

Belongs to the endoribonuclease YbeY family. Zn(2+) is required as a cofactor.

Its subcellular location is the cytoplasm. Its function is as follows. Single strand-specific metallo-endoribonuclease involved in late-stage 70S ribosome quality control and in maturation of the 3' terminus of the 16S rRNA. The protein is Endoribonuclease YbeY of Francisella tularensis subsp. mediasiatica (strain FSC147).